The following is a 152-amino-acid chain: Superoxide dismutase [Cu-Zn] (152 aa).

Positions 45, 47, and 62 each coordinate Cu cation. A disulfide bridge connects residues Cys-56 and Cys-145. Zn(2+)-binding residues include His-62, His-70, His-79, and Asp-82. His-119 provides a ligand contact to Cu cation.

It belongs to the Cu-Zn superoxide dismutase family. Homodimer. Cu cation is required as a cofactor. The cofactor is Zn(2+).

The protein localises to the cytoplasm. The catalysed reaction is 2 superoxide + 2 H(+) = H2O2 + O2. Destroys radicals which are normally produced within the cells and which are toxic to biological systems. This chain is Superoxide dismutase [Cu-Zn] (SODCC), found in Zantedeschia aethiopica (White calla lily).